The sequence spans 397 residues: MSLWKKTLYKSVCLALALLVAVTVFQRSVTPGQFLQDPLPPTPGPAKTGNLVNPNSFWKSSKDVAAPTPTVPRGPQVWDVITTNCSININLTHQPWFQSLEPHFRQFLAYRHCRYFPMLLNHPEKCAGDVYMLVVVKSVITQHDRREVIRQTWGHEWESAGLGRGAVRTLFLLGTASKQEERTHYQQLLAYEDRLYADILQWDFLDSFFNLTLKEIHFLKWLDIYCPNVPFVFKGDDDVFVNPTNLLEFLSDRQPQENLFVGDVLKHARPIRKKDNKYYIPAVMYGKATYPPYAGGGGFLMSGSLARQLHHACDTLELFPIDDVFLGMCLEVLGVKPTGHEGFKTFGISRVRSSRMNKEPCFYRAMLVVHKLLPAELLAMWDLVHSNLTCSVKFQVL.

Residues M1–K6 lie on the Cytoplasmic side of the membrane. The helical transmembrane segment at T7 to Q26 threads the bilayer. Residues R27 to L397 lie on the Lumenal side of the membrane. Residues N84, N90, N210, and N387 are each glycosylated (N-linked (GlcNAc...) asparagine).

It belongs to the glycosyltransferase 31 family. As to expression, strongly expressed in placenta and colon. Moderately expressed in lung, stomach, small intestine and kidney. Very weakly expressed in cerebrum, cerebellum, heart and testis.

It is found in the golgi apparatus membrane. The protein operates within protein modification; protein glycosylation. In terms of biological role, N-acetyl glucosamine (GlcNAc) transferase that catalyzes the transfer of GlcNAc via a beta1-&gt;3 linkage from UDP-GlcNAc to the non-reducing terminal galactose (Gal) in the linearly growing chain of N- and O-linked keratan sulfate proteoglycans. Cooperates with B4GALT4 galactosyltransferase and CHST6 and CHST1 sulfotransferases to construct and elongate mono- and disulfated disaccharide units [-&gt;3Galbeta1-&gt;4(6-sulfoGlcNAcbeta)1-&gt;] and [-&gt;3(6-sulfoGalbeta)1-&gt;4(6-sulfoGlcNAcbeta)1-&gt;] within keratan sulfate polymer. Involved in biosynthesis of N-linked keratan sulfate proteoglycans in cornea, with an impact on proteoglycan fibril organization and corneal transparency. May play a role in the maintenance of tissue architecture by suppressing cellular motility and invasion. The protein is UDP-GlcNAc:betaGal beta-1,3-N-acetylglucosaminyltransferase 7 (B3gnt7) of Mus musculus (Mouse).